Here is a 611-residue protein sequence, read N- to C-terminus: UvrABC system protein C (611 aa).

Residues 14–91 (TSPGCYIHKD…IKENQPKYNI (78 aa)) form the GIY-YIG domain. In terms of domain architecture, UVR spans 196-231 (DQIIEDLRGKMAGAAQAMEFEKAAEYRDLIQSIGTL). The segment at 587–611 (KLNPKTQEQEQAQLREVAEPQIGLE) is disordered.

The protein belongs to the UvrC family. As to quaternary structure, interacts with UvrB in an incision complex.

Its subcellular location is the cytoplasm. In terms of biological role, the UvrABC repair system catalyzes the recognition and processing of DNA lesions. UvrC both incises the 5' and 3' sides of the lesion. The N-terminal half is responsible for the 3' incision and the C-terminal half is responsible for the 5' incision. The chain is UvrABC system protein C from Streptococcus sanguinis (strain SK36).